Here is an 864-residue protein sequence, read N- to C-terminus: Mitochondrial 15S rRNA processing factor CCM1 (864 aa).

The transit peptide at 1 to 76 (MYMARCGPKN…REFSNTLKER (76 aa)) directs the protein to the mitochondrion. Composition is skewed to polar residues over residues 80-94 (TKSV…NSIA) and 102-112 (NVNVTKTSSVP). The segment at 80–117 (TKSVNSDGHQSNSIAPISEDSRNVNVTKTSSVPNEEKS) is disordered. PPR repeat units lie at residues 319–353 (NKQN…STKH) and 356–390 (DICT…NIKP).

It belongs to the CCM1 family. As to quaternary structure, binds to mitochondrial small subunit 15S rRNA.

The protein resides in the mitochondrion. Regulates mitochondrial small subunit maturation by controlling 15S rRNA 5'-end processing. Localizes to the 5' precursor of the 15S rRNA in a position that is subsequently occupied by mS47 in the mature yeast mtSSU. Uses structure and sequence-specific RNA recognition, binding to a single-stranded region of the precursor and specifically recognizing bases -6 to -1. The exchange of Ccm1 for mS47 is coupled to the irreversible removal of precursor rRNA that is accompanied by conformational changes of the mitoribosomal proteins uS5m and mS26. These conformational changes signal completion of 5'-end rRNA processing through protection of the mature 5'-end of the 15S rRNA and stabilization of mS47. The removal of the 5' precursor together with the dissociation of Ccm1 may be catalyzed by the 5'-3' exoribonuclease Pet127. Involved in the specific removal of group I introns in mitochondrial encoded transcripts. The protein is Mitochondrial 15S rRNA processing factor CCM1 of Saccharomyces cerevisiae (strain ATCC 204508 / S288c) (Baker's yeast).